Consider the following 123-residue polypeptide: UPF0738 protein BcerKBAB4_1107 (123 aa).

It belongs to the UPF0738 family.

This chain is UPF0738 protein BcerKBAB4_1107, found in Bacillus mycoides (strain KBAB4) (Bacillus weihenstephanensis).